We begin with the raw amino-acid sequence, 319 residues long: 1-aminocyclopropane-1-carboxylate oxidase (319 aa).

Residues 153-253 form the Fe2OG dioxygenase domain; that stretch reads PTFGTKVSNY…RMSIASFYNP (101 aa). Residues histidine 177, aspartate 179, and histidine 234 each coordinate Fe cation.

Belongs to the iron/ascorbate-dependent oxidoreductase family. Fe cation is required as a cofactor.

The enzyme catalyses 1-aminocyclopropane-1-carboxylate + L-ascorbate + O2 = ethene + L-dehydroascorbate + hydrogen cyanide + CO2 + 2 H2O. It participates in alkene biosynthesis; ethylene biosynthesis via S-adenosyl-L-methionine; ethylene from S-adenosyl-L-methionine: step 2/2. The protein is 1-aminocyclopropane-1-carboxylate oxidase (ACO) of Actinidia deliciosa (Kiwi).